The sequence spans 301 residues: 4-hydroxy-tetrahydrodipicolinate synthase (301 aa).

Threonine 46 lines the pyruvate pocket. Residue tyrosine 134 is the Proton donor/acceptor of the active site. The Schiff-base intermediate with substrate role is filled by lysine 162. Isoleucine 203 is a pyruvate binding site.

It belongs to the DapA family. In terms of assembly, homotetramer; dimer of dimers.

It is found in the cytoplasm. It catalyses the reaction L-aspartate 4-semialdehyde + pyruvate = (2S,4S)-4-hydroxy-2,3,4,5-tetrahydrodipicolinate + H2O + H(+). Its pathway is amino-acid biosynthesis; L-lysine biosynthesis via DAP pathway; (S)-tetrahydrodipicolinate from L-aspartate: step 3/4. Functionally, catalyzes the condensation of (S)-aspartate-beta-semialdehyde [(S)-ASA] and pyruvate to 4-hydroxy-tetrahydrodipicolinate (HTPA). This Anaplasma marginale (strain St. Maries) protein is 4-hydroxy-tetrahydrodipicolinate synthase.